Here is a 122-residue protein sequence, read N- to C-terminus: LYR motif-containing protein 1 (122 aa).

It belongs to the complex I LYR family.

This is LYR motif-containing protein 1 (lyrm1) from Xenopus laevis (African clawed frog).